A 354-amino-acid chain; its full sequence is Pyrimidine monooxygenase RutA (354 aa).

Residues 49 to 50 (IK), asparagine 115, glutamate 124, 140 to 141 (RY), and serine 189 contribute to the FMN site.

This sequence belongs to the NtaA/SnaA/DszA monooxygenase family. RutA subfamily.

The enzyme catalyses uracil + FMNH2 + NADH + O2 = (Z)-3-ureidoacrylate + FMN + NAD(+) + H2O + H(+). It carries out the reaction thymine + FMNH2 + NADH + O2 = (Z)-2-methylureidoacrylate + FMN + NAD(+) + H2O + H(+). Its function is as follows. Catalyzes the pyrimidine ring opening between N-3 and C-4 by an unusual flavin hydroperoxide-catalyzed mechanism, adding oxygen atoms in the process to yield ureidoacrylate peracid, that immediately reacts with FMN forming ureidoacrylate and FMN-N(5)-oxide. The FMN-N(5)-oxide reacts spontaneously with NADH to produce FMN. Requires the flavin reductase RutF to regenerate FMN in vivo. This Caulobacter sp. (strain K31) protein is Pyrimidine monooxygenase RutA.